A 279-amino-acid chain; its full sequence is Pantothenate synthetase (279 aa).

26–33 (MGNLHEGH) is a binding site for ATP. The active-site Proton donor is the His-33. Residue Gln-57 participates in (R)-pantoate binding. A beta-alanine-binding site is contributed by Gln-57. 144-147 (GKKD) contributes to the ATP binding site. Gln-150 is a (R)-pantoate binding site. Residues Val-173 and 181–184 (LSSR) each bind ATP.

It belongs to the pantothenate synthetase family. Homodimer.

It localises to the cytoplasm. It catalyses the reaction (R)-pantoate + beta-alanine + ATP = (R)-pantothenate + AMP + diphosphate + H(+). It participates in cofactor biosynthesis; (R)-pantothenate biosynthesis; (R)-pantothenate from (R)-pantoate and beta-alanine: step 1/1. Functionally, catalyzes the condensation of pantoate with beta-alanine in an ATP-dependent reaction via a pantoyl-adenylate intermediate. The sequence is that of Pantothenate synthetase from Burkholderia lata (strain ATCC 17760 / DSM 23089 / LMG 22485 / NCIMB 9086 / R18194 / 383).